The sequence spans 167 residues: NAD(P)H-quinone oxidoreductase subunit I, chloroplastic (167 aa).

2 4Fe-4S ferredoxin-type domains span residues 55–84 (GRIHFEFDKCIACEVCVRVCPIDLPVVDWK) and 95–124 (LNYSIDFGICIFCGNCVEYCPTNCLSMTEE). 8 residues coordinate [4Fe-4S] cluster: cysteine 64, cysteine 67, cysteine 70, cysteine 74, cysteine 104, cysteine 107, cysteine 110, and cysteine 114.

It belongs to the complex I 23 kDa subunit family. In terms of assembly, NDH is composed of at least 16 different subunits, 5 of which are encoded in the nucleus. Requires [4Fe-4S] cluster as cofactor.

It is found in the plastid. The protein localises to the chloroplast thylakoid membrane. It catalyses the reaction a plastoquinone + NADH + (n+1) H(+)(in) = a plastoquinol + NAD(+) + n H(+)(out). The enzyme catalyses a plastoquinone + NADPH + (n+1) H(+)(in) = a plastoquinol + NADP(+) + n H(+)(out). Functionally, NDH shuttles electrons from NAD(P)H:plastoquinone, via FMN and iron-sulfur (Fe-S) centers, to quinones in the photosynthetic chain and possibly in a chloroplast respiratory chain. The immediate electron acceptor for the enzyme in this species is believed to be plastoquinone. Couples the redox reaction to proton translocation, and thus conserves the redox energy in a proton gradient. This chain is NAD(P)H-quinone oxidoreductase subunit I, chloroplastic, found in Gossypium barbadense (Sea Island cotton).